Consider the following 29-residue polypeptide: Brevinin-2Tc (29 aa).

Cys-23 and Cys-29 are oxidised to a cystine.

It belongs to the frog skin active peptide (FSAP) family. Brevinin subfamily. Expressed by the skin glands.

Its subcellular location is the secreted. Functionally, antibacterial activity against representative Gram-negative and Gram-positive bacteria. This Rana temporaria (European common frog) protein is Brevinin-2Tc.